A 463-amino-acid polypeptide reads, in one-letter code: Ribosomal protein uS12 methylthiotransferase RimO (463 aa).

The region spanning 15–130 (PKVGMVSLGC…VMQVVHSHLP (116 aa)) is the MTTase N-terminal domain. Residues cysteine 24, cysteine 60, cysteine 89, cysteine 161, cysteine 165, and cysteine 168 each coordinate [4Fe-4S] cluster. Residues 147–392 (LTPRHYAYLK…MEVAEEVSAA (246 aa)) enclose the Radical SAM core domain. One can recognise a TRAM domain in the interval 395–463 (ERKVGKTLKV…ADGHDLWGEV (69 aa)).

This sequence belongs to the methylthiotransferase family. RimO subfamily. Requires [4Fe-4S] cluster as cofactor.

Its subcellular location is the cytoplasm. The enzyme catalyses L-aspartate(89)-[ribosomal protein uS12]-hydrogen + (sulfur carrier)-SH + AH2 + 2 S-adenosyl-L-methionine = 3-methylsulfanyl-L-aspartate(89)-[ribosomal protein uS12]-hydrogen + (sulfur carrier)-H + 5'-deoxyadenosine + L-methionine + A + S-adenosyl-L-homocysteine + 2 H(+). Catalyzes the methylthiolation of an aspartic acid residue of ribosomal protein uS12. In Burkholderia thailandensis (strain ATCC 700388 / DSM 13276 / CCUG 48851 / CIP 106301 / E264), this protein is Ribosomal protein uS12 methylthiotransferase RimO.